A 703-amino-acid polypeptide reads, in one-letter code: Protein teflon (703 aa).

Residues 32–55 (MFCHFCKDIFTHLPEFMRHLQWSH) form a C2H2-type 1 zinc finger. 3 disordered regions span residues 78 to 111 (TSED…PGSS), 138 to 161 (SHEQ…ARKP), and 339 to 434 (SQQP…SKLE). Composition is skewed to polar residues over residues 84 to 94 (QSQANSCSSGD) and 138 to 147 (SHEQSYSKTP). The span at 148 to 161 (PDSRTEGFRCARKP) shows a compositional bias: basic and acidic residues. 2 stretches are compositionally biased toward polar residues: residues 339 to 352 (SQQP…NNAV) and 364 to 373 (SLTVISSSPI). 2 C2H2-type zinc fingers span residues 649-672 (YFCE…QSVH) and 677-700 (FTCS…KTVH).

Belongs to the Teflon family.

It localises to the nucleus. The protein localises to the chromosome. In terms of biological role, specifically required in males for proper segregation of autosomal bivalents at meiosis I. Expression is required in the male germ line prior to spermatocyte stage S4. May have a role as a bridging molecule maintaining adhesion to hold autosome bivalents together via heterochromatic connections. The sequence is that of Protein teflon from Drosophila pseudoobscura pseudoobscura (Fruit fly).